Consider the following 490-residue polypeptide: UDP-N-acetylmuramate--L-alanine ligase (490 aa).

133–139 (GTHGKTS) serves as a coordination point for ATP.

It belongs to the MurCDEF family.

The protein resides in the cytoplasm. The catalysed reaction is UDP-N-acetyl-alpha-D-muramate + L-alanine + ATP = UDP-N-acetyl-alpha-D-muramoyl-L-alanine + ADP + phosphate + H(+). The protein operates within cell wall biogenesis; peptidoglycan biosynthesis. Functionally, cell wall formation. This Saccharopolyspora erythraea (strain ATCC 11635 / DSM 40517 / JCM 4748 / NBRC 13426 / NCIMB 8594 / NRRL 2338) protein is UDP-N-acetylmuramate--L-alanine ligase.